The sequence spans 434 residues: Enolase (434 aa).

Q165 provides a ligand contact to (2R)-2-phosphoglycerate. The active-site Proton donor is the E207. The Mg(2+) site is built by D244, E291, and D318. Residues K343, R372, S373, and K394 each contribute to the (2R)-2-phosphoglycerate site. K343 functions as the Proton acceptor in the catalytic mechanism.

Belongs to the enolase family. Mg(2+) serves as cofactor.

The protein localises to the cytoplasm. Its subcellular location is the secreted. It is found in the cell surface. It catalyses the reaction (2R)-2-phosphoglycerate = phosphoenolpyruvate + H2O. It functions in the pathway carbohydrate degradation; glycolysis; pyruvate from D-glyceraldehyde 3-phosphate: step 4/5. Catalyzes the reversible conversion of 2-phosphoglycerate (2-PG) into phosphoenolpyruvate (PEP). It is essential for the degradation of carbohydrates via glycolysis. This Staphylococcus haemolyticus (strain JCSC1435) protein is Enolase.